The following is a 469-amino-acid chain: UDP-N-acetylmuramoylalanine--D-glutamate ligase (469 aa).

110–116 (GTNGKST) lines the ATP pocket.

This sequence belongs to the MurCDEF family.

It localises to the cytoplasm. The enzyme catalyses UDP-N-acetyl-alpha-D-muramoyl-L-alanine + D-glutamate + ATP = UDP-N-acetyl-alpha-D-muramoyl-L-alanyl-D-glutamate + ADP + phosphate + H(+). It participates in cell wall biogenesis; peptidoglycan biosynthesis. Its function is as follows. Cell wall formation. Catalyzes the addition of glutamate to the nucleotide precursor UDP-N-acetylmuramoyl-L-alanine (UMA). This Synechococcus sp. (strain JA-3-3Ab) (Cyanobacteria bacterium Yellowstone A-Prime) protein is UDP-N-acetylmuramoylalanine--D-glutamate ligase.